Here is a 132-residue protein sequence, read N- to C-terminus: Small ribosomal subunit protein uS11 (132 aa).

The segment at Met-1–Ala-24 is disordered. Over residues Ala-7 to Arg-16 the composition is skewed to basic residues.

The protein belongs to the universal ribosomal protein uS11 family. As to quaternary structure, part of the 30S ribosomal subunit. Interacts with proteins S7 and S18. Binds to IF-3.

Located on the platform of the 30S subunit, it bridges several disparate RNA helices of the 16S rRNA. Forms part of the Shine-Dalgarno cleft in the 70S ribosome. The polypeptide is Small ribosomal subunit protein uS11 (Bifidobacterium longum (strain DJO10A)).